The sequence spans 207 residues: Holliday junction branch migration complex subunit RuvA (207 aa).

The tract at residues 1–63 (MIDSLHGEVL…DDGIDLYAFE (63 aa)) is domain I. Residues 64–142 (SDEARQMFAM…VFDSGDSASE (79 aa)) are domain II. The flexible linker stretch occupies residues 143 to 154 (PQSGVGGNSEAE). The domain III stretch occupies residues 155 to 207 (VDSGVVGTVTQALVELGFPEKQAEKTATSAAAEGGSVSEILKRALRSMSSERN).

Belongs to the RuvA family. As to quaternary structure, homotetramer. Forms an RuvA(8)-RuvB(12)-Holliday junction (HJ) complex. HJ DNA is sandwiched between 2 RuvA tetramers; dsDNA enters through RuvA and exits via RuvB. An RuvB hexamer assembles on each DNA strand where it exits the tetramer. Each RuvB hexamer is contacted by two RuvA subunits (via domain III) on 2 adjacent RuvB subunits; this complex drives branch migration. In the full resolvosome a probable DNA-RuvA(4)-RuvB(12)-RuvC(2) complex forms which resolves the HJ.

The protein localises to the cytoplasm. The RuvA-RuvB-RuvC complex processes Holliday junction (HJ) DNA during genetic recombination and DNA repair, while the RuvA-RuvB complex plays an important role in the rescue of blocked DNA replication forks via replication fork reversal (RFR). RuvA specifically binds to HJ cruciform DNA, conferring on it an open structure. The RuvB hexamer acts as an ATP-dependent pump, pulling dsDNA into and through the RuvAB complex. HJ branch migration allows RuvC to scan DNA until it finds its consensus sequence, where it cleaves and resolves the cruciform DNA. The sequence is that of Holliday junction branch migration complex subunit RuvA from Corynebacterium kroppenstedtii (strain DSM 44385 / JCM 11950 / CIP 105744 / CCUG 35717).